Consider the following 221-residue polypeptide: MDGMENLMPREKMLQYGIETLTDVELLALFLRVGTRRQDVLSYAQALLQRFGSLYALLSADKAQLIAVDGLGLAKYAQLKGIAELARRYFSSQLVEEAALVTPSMTREFLQSQLTEEEREIFMVIFLDNQNRVLKHSRLFSGTLSHVEVHPREIVREAIKVNAAAVILAHNHPSGSPEPSQADRLITERVIKCCRFMEIRVLDHLVIGRGAYVSFAERGWI.

An MPN domain is found at 99–221 (ALVTPSMTRE…YVSFAERGWI (123 aa)). Residues His-170, His-172, and Asp-183 each coordinate Zn(2+). A JAMM motif motif is present at residues 170–183 (HNHPSGSPEPSQAD).

Belongs to the UPF0758 family. YicR subfamily.

This chain is UPF0758 protein KPN78578_39390, found in Klebsiella pneumoniae subsp. pneumoniae (strain ATCC 700721 / MGH 78578).